The following is a 218-amino-acid chain: Uracil-DNA glycosylase (218 aa).

Asp60 acts as the Proton acceptor in catalysis.

The protein belongs to the uracil-DNA glycosylase (UDG) superfamily. UNG family.

The protein resides in the cytoplasm. The enzyme catalyses Hydrolyzes single-stranded DNA or mismatched double-stranded DNA and polynucleotides, releasing free uracil.. Excises uracil residues from the DNA which can arise as a result of misincorporation of dUMP residues by DNA polymerase or due to deamination of cytosine. The chain is Uracil-DNA glycosylase from Shewanella oneidensis (strain ATCC 700550 / JCM 31522 / CIP 106686 / LMG 19005 / NCIMB 14063 / MR-1).